The chain runs to 615 residues: Glutamine--fructose-6-phosphate aminotransferase [isomerizing] (615 aa).

Cysteine 2 (nucleophile; for GATase activity) is an active-site residue. Residues 2–220 (CGIVGYVGPQ…QDQVVELRRD (219 aa)) form the Glutamine amidotransferase type-2 domain. SIS domains lie at 287 to 427 (IPPG…VRGT) and 460 to 605 (LARS…VDQP). Residue lysine 610 is the For Fru-6P isomerization activity of the active site.

As to quaternary structure, homodimer.

Its subcellular location is the cytoplasm. It carries out the reaction D-fructose 6-phosphate + L-glutamine = D-glucosamine 6-phosphate + L-glutamate. Functionally, catalyzes the first step in hexosamine metabolism, converting fructose-6P into glucosamine-6P using glutamine as a nitrogen source. The protein is Glutamine--fructose-6-phosphate aminotransferase [isomerizing] of Streptomyces coelicolor (strain ATCC BAA-471 / A3(2) / M145).